The chain runs to 310 residues: Deoxyribonuclease gamma (310 aa).

The signal sequence occupies residues 1–25; sequence MSLYPASPYLASLLLFILALHGALS. The Bipartite nuclear localization signal motif lies at 40–56; the sequence is KKENHNAMDIIVKIIKR. Active-site residues include Glu-105 and His-160. Cys-199 and Cys-236 are oxidised to a cystine. Residues 289–310 form a not required for free DNA-nuclease activity but required for activity towards liposome-coated DNA region; the sequence is SRAFTNSRKSVSLKKKKKGSRS. The Nuclear localization signal motif lies at 301–307; sequence LKKKKKG.

Belongs to the DNase I family. As to quaternary structure, monomer. Ca(2+) serves as cofactor. The cofactor is Mg(2+). In terms of processing, seems to be synthesized as an inactive precursor protein and converted into an active mature enzyme by removal of the N-terminal precursor peptide during apoptosis. Post-translationally, poly-ADP-ribosylated by PARP1. ADP-ribosylation negatively regulates enzymatic activity during apoptosis. Detected at high levels in spleen, lymph nodes, thymus and liver. Observed also in kidney and testis, but not in brain or heart.

It is found in the nucleus. The protein localises to the secreted. With respect to regulation, inhibited by zinc. Functionally, has DNA hydrolytic activity. Is capable of both single- and double-stranded DNA cleavage, producing DNA fragments with 3'-OH ends. Can cleave chromatin to nucleosomal units and cleaves nucleosomal and liposome-coated DNA. Acts in internucleosomal DNA fragmentation (INDF) during apoptosis and necrosis. The role in apoptosis includes myogenic and neuronal differentiation, and BCR-mediated clonal deletion of self-reactive B cells. Is active on chromatin in apoptotic cell-derived membrane-coated microparticles and thus suppresses anti-DNA autoimmunity. Together with DNASE1, plays a key role in degrading neutrophil extracellular traps (NETs). NETs are mainly composed of DNA fibers and are released by neutrophils to bind pathogens during inflammation. Degradation of intravascular NETs by DNASE1 and DNASE1L3 is required to prevent formation of clots that obstruct blood vessels and cause organ damage following inflammation. This chain is Deoxyribonuclease gamma (Dnase1l3), found in Rattus norvegicus (Rat).